The chain runs to 370 residues: Zinc finger protein 830 (370 aa).

Disordered stretches follow at residues 1-21 (MASS…QEEL) and 75-220 (HRER…LVPH). N-acetylalanine is present on Ala-2. The stretch at 16 to 40 (VNQEELRRLMKEKQRLSTNRKRIES) forms a coiled coil. A C2H2-type zinc finger spans residues 53–75 (CALCNTPVKSELLWQTHVLGKQH). Over residues 90 to 99 (QGPSAGTAPQ) the composition is skewed to polar residues. A compositionally biased stretch (basic and acidic residues) spans 104–115 (KTTDVESQDAKK). Residues 121 to 134 (DQVQPSTSASSANF) are compositionally biased toward polar residues. The span at 156-171 (DYEEEEEEEEEEELGG) shows a compositional bias: acidic residues. Residues 172-191 (GEERRDSSKHLPDAQGREHS) show a composition bias toward basic and acidic residues. Positions 196 to 212 (RETTSNVLPNDPFNTNP) are enriched in polar residues. A Phosphoserine modification is found at Ser-223. Residues 310 to 338 (IECYRRVEKLRNRQDEIKNKLKEVLTIKE) are a coiled coil. Phosphoserine is present on residues Ser-349 and Ser-360.

Component of the XAB2 complex, a multimeric protein complex composed of XAB2, PRPF19, AQR, ZNF830, ISY1, and PPIE; this complex binds preferentially to RNA. Interacts with XAB2. Identified in a pentameric intron-binding (IB) complex composed of AQR, XAB2, ISY1, ZNF830 and PPIE that is incorporated into the spliceosome as a preassembled complex. The IB complex does not contain PRPF19. Post-translationally, phosphorylated in response to DNA damage by the cell cycle checkpoint kinases ATR/ATM.

Its subcellular location is the nucleus. It is found in the chromosome. The protein localises to the nucleus speckle. Its function is as follows. May play a role in pre-mRNA splicing as component of the spliceosome. Acts as an important regulator of the cell cycle that participates in the maintenance of genome integrity. During cell cycle progression in embryonic fibroblast, prevents replication fork collapse, double-strand break formation and cell cycle checkpoint activation. Controls mitotic cell cycle progression and cell survival in rapidly proliferating intestinal epithelium and embryonic stem cells. During the embryo preimplantation, controls different aspects of M phase. During early oocyte growth, plays a role in oocyte survival by preventing chromosomal breaks formation, activation of TP63 and reduction of transcription. In Rattus norvegicus (Rat), this protein is Zinc finger protein 830.